The sequence spans 1246 residues: Stromal processing peptidase, chloroplastic (1246 aa).

A chloroplast-targeting transit peptide spans 1–136 (MASFPSPPLA…AKIRRRHVLH (136 aa)). Residue histidine 228 coordinates Zn(2+). The active-site Proton acceptor is glutamate 231. Histidine 232 is a binding site for Zn(2+). The active site involves glutamate 302. Glutamate 309 provides a ligand contact to Zn(2+).

The protein belongs to the peptidase M16 family. Requires Zn(2+) as cofactor. In terms of tissue distribution, widely expressed.

It is found in the plastid. It localises to the chloroplast stroma. Cleaves presequences (transit peptides) from chloroplastic protein precursors. Initially recognizes a precursor by binding to the C-terminus of its transit peptide and then removes the transit peptide in a single endoproteolytic step. In a next step, pursues the cleavage of transit peptide to a subfragment form. The sequence is that of Stromal processing peptidase, chloroplastic from Oryza sativa subsp. indica (Rice).